Reading from the N-terminus, the 483-residue chain is MSDWTEAYRPTTLSEVRGNNKARDAFEEWAKAWEDHREAVILHGSPGVGKTSAAHALANDMGWPVLEMNASDARTKDEIERFAGRAASNATLGGGRQLIILDEADNLHQHKDRGGAAAMTRLVKDATQPVVLIANDYYEMSSGLRSACRDVEFRDVSARSIVPVLRDICRQENVEFDEDVLQEIAEANRGDLRGAVKDLQARERDGEIKPEGSEGSRDRTEDIFAFLDAVLKEESAEEALQTAYAVDETPDNLLQWIEDKVPKVYEGDELADAYEHLADADVWLGRVRATQNYSYWRYATDNVAAGVAAVRQEDRGGWTRYGGAPYRSSRDSTRDYIATRIAESAGVSTATARREILPYLSAMTHHCNNRELTVRMTARYELDAEHVAFITGSGKTTNKVQGIVEDAETRRETAAVDHGGGIFAPAVDDAQSDTESDDDDDGDTLAAFGADEPKEESVNREQSDGTADAEESDDGQAGLSDFM.

44–51 is an ATP binding site; it reads GSPGVGKT. Residues 415-483 form a disordered region; it reads AVDHGGGIFA…DGQAGLSDFM (69 aa). The span at 430–443 shows a compositional bias: acidic residues; that stretch reads AQSDTESDDDDDGD. Over residues 451–463 the composition is skewed to basic and acidic residues; that stretch reads DEPKEESVNREQS.

Belongs to the activator 1 small subunits family. RfcL subfamily. In terms of assembly, heteromultimer composed of small subunits (RfcS) and large subunits (RfcL).

Functionally, part of the RFC clamp loader complex which loads the PCNA sliding clamp onto DNA. The polypeptide is Replication factor C large subunit (Natronomonas pharaonis (strain ATCC 35678 / DSM 2160 / CIP 103997 / JCM 8858 / NBRC 14720 / NCIMB 2260 / Gabara) (Halobacterium pharaonis)).